We begin with the raw amino-acid sequence, 480 residues long: F-box only protein 3 (480 aa).

The region spanning 10–56 (LLTLESLPTDPLLLILSFVDYRDLINCCYVSRRLSQLSTHDPLWRRH) is the F-box domain. One can recognise an ApaG domain in the interval 278–408 (VATTGDITVS…FHMACPTFRV (131 aa)). Acidic residues predominate over residues 419–458 (EYEEMEEEAEEEEEEENDDSADMDESDESDADENESDEGE). The segment at 419-463 (EYEEMEEEAEEEEEEENDDSADMDESDESDADENESDEGEGEARR) is disordered.

In terms of assembly, part of a SCF (SKP1-cullin-F-box) protein ligase complex SCF(FBXO3) consisting of FBXO3, SKP1, CUL1 and RBX1. Interacts with PML, interaction is direct and takes place either alone or within the SCF complex.

It is found in the nucleus. Its pathway is protein modification; protein ubiquitination. In terms of biological role, substrate recognition component of the SCF (SKP1-CUL1-F-box protein)-type E3 ubiquitin ligase complex, SCF(FBXO3), which mediates the ubiquitination and subsequent proteasomal degradation of target proteins. Mediates the ubiquitination of HIPK2 and probably that of EP300, leading to rapid degradation by the proteasome. In the presence of PML, HIPK2 ubiquitination still occurs, but degradation is prevented. PML, HIPK2 and FBXO3 may act synergically to activate p53/TP53-dependent transactivation. The SCF(FBXO3) also acts as a regulator of inflammation by mediating ubiquitination and degradation of FBXL2: specifically recognizes FBXL2 phosphorylated at 'Thr-404' and promotes its ubiquitination. This chain is F-box only protein 3 (Fbxo3), found in Mus musculus (Mouse).